The primary structure comprises 237 residues: Uridylate kinase (237 aa).

Lys12 to Gly15 contributes to the ATP binding site. Positions Gly20–Gly25 are involved in allosteric activation by GTP. Gly54 is a binding site for UMP. ATP is bound by residues Gly55 and Arg59. UMP contacts are provided by residues Asp74 and Thr135–Thr142. ATP contacts are provided by Thr162, Tyr168, and Asp171.

This sequence belongs to the UMP kinase family. Homohexamer.

The protein localises to the cytoplasm. It carries out the reaction UMP + ATP = UDP + ADP. It functions in the pathway pyrimidine metabolism; CTP biosynthesis via de novo pathway; UDP from UMP (UMPK route): step 1/1. Its activity is regulated as follows. Allosterically activated by GTP. Inhibited by UTP. In terms of biological role, catalyzes the reversible phosphorylation of UMP to UDP. In Haemophilus influenzae (strain PittGG), this protein is Uridylate kinase.